An 801-amino-acid chain; its full sequence is MVVPACVLVFCVAVVAGATSEPPGPEQRVVRRAAEVPGPEPSQQEQVAFGSGDTVELSCHPPGGAPTGPTVWAKDGTGLVASHRILVGPQRLQVLNASHEDAGVYSCQHRLTRRVLCHFSVRVTDAPSSGDDEDGEDVAEDTGAPYWTRPERMDKKLLAVPAANTVRFRCPAAGNPTPSISWLKNGKEFRGEHRIGGIKLRHQQWSLVMESVVPSDRGNYTCVVENKFGSIRQTYTLDVLERSPHRPILQAGLPANQTAILGSDVEFHCKVYSDAQPHIQWLKHVEVNGSKVGPDGTPYVTVLKTAGANTTDKELEVLSLHNVTFEDAGEYTCLAGNSIGFSHHSAWLVVLPAEEELMETDEAGSVYAGVLSYGVVFFLFILVVAAVILCRLRSPPKKGLGSPTVHKVSRFPLKRQVSLESNSSMNSNTPLVRIARLSSGEGPVLANVSELELPADPKWELSRTRLTLGKPLGEGCFGQVVMAEAIGIDKDRTAKPVTVAVKMLKDDATDKDLSDLVSEMEMMKMIGKHKNIINLLGACTQGGPLYVLVEYAAKGNLREFLRARRPPGMDYSFDACRLPEEQLTCKDLVSCAYQVARGMEYLASQKCIHRDLAARNVLVTEDNVMKIADFGLARDVHNLDYYKKTTNGRLPVKWMAPEALFDRVYTHQSDVWSFGVLLWEIFTPGGPSPYPGIPVEELFKLLKEGHRMDKPASCTHDLYMIMRECWHAVPSQRPTFKQLVEDLDRILTVTSTDEYLDLSVPFEQYSPGGQDTPSSSSSGDDSVFTHDLLPPGPPSNGGPRT.

Residues 1 to 20 (MVVPACVLVFCVAVVAGATS) form the signal peptide. The Extracellular portion of the chain corresponds to 21–369 (EPPGPEQRVV…TDEAGSVYAG (349 aa)). Residues 22–124 (PPGPEQRVVR…VLCHFSVRVT (103 aa)) form the Ig-like C2-type 1 domain. Cysteine 59 and cysteine 107 are disulfide-bonded. Residue asparagine 96 is glycosylated (N-linked (GlcNAc...) asparagine). Residues 125–146 (DAPSSGDDEDGEDVAEDTGAPY) form a disordered region. The span at 130 to 140 (GDDEDGEDVAE) shows a compositional bias: acidic residues. 2 consecutive Ig-like C2-type domains span residues 145-238 (PYWT…YTLD) and 247-349 (PILQ…AWLV). Residues cysteine 170 and cysteine 222 are joined by a disulfide bond. N-linked (GlcNAc...) asparagine glycosylation is found at asparagine 219, asparagine 256, asparagine 288, asparagine 309, and asparagine 322. Cysteine 269 and cysteine 333 are oxidised to a cystine. Residues 370-390 (VLSYGVVFFLFILVVAAVILC) traverse the membrane as a helical segment. The Cytoplasmic segment spans residues 391–801 (RLRSPPKKGL…GPPSNGGPRT (411 aa)). Residues serine 438 and serine 439 each carry the phosphoserine modification. Residues 466-756 (LTLGKPLGEG…LTVTSTDEYL (291 aa)) enclose the Protein kinase domain. Residues 472–480 (LGEGCFGQV) and lysine 502 contribute to the ATP site. The active-site Proton acceptor is aspartate 611. 4 positions are modified to phosphotyrosine; by autocatalysis: tyrosine 641, tyrosine 642, tyrosine 719, and tyrosine 755. Residues 762-801 (FEQYSPGGQDTPSSSSSGDDSVFTHDLLPPGPPSNGGPRT) form a disordered region. Residues 766–782 (SPGGQDTPSSSSSGDDS) are compositionally biased toward low complexity. Residues 790 to 801 (PPGPPSNGGPRT) are compositionally biased toward pro residues.

This sequence belongs to the protein kinase superfamily. Tyr protein kinase family. Fibroblast growth factor receptor subfamily. In terms of assembly, monomer. Homodimer after ligand binding. Interacts with FGF1, FGF2, FGF4, FGF6; FGF8, FGF9, FGF10, FGF17, FGF18, FGF19, FGF20 and FGF23 (in vitro). Interacts with KLB. Affinity for fibroblast growth factors (FGFs) is increased by heparan sulfate glycosaminoglycans that function as coreceptors. Likewise, KLB increases the affinity for FGF19 and FGF21. Interacts with PIK3R1, PLCG1, SOCS1 and SOCS3. Post-translationally, autophosphorylated. Binding of FGF family members together with heparan sulfate proteoglycan or heparin promotes receptor dimerization and autophosphorylation on tyrosine residues. Autophosphorylation occurs in trans between the two FGFR molecules present in the dimer. Phosphorylation at Tyr-719 is essential for stimulation of cell proliferation and activation of PIK3R1, STAT1 and MAP kinase signaling. Phosphorylation at Tyr-755 is required for interaction with PIK3R1 and PLCG1. Ubiquitinated. Is rapidly ubiquitinated after ligand binding and autophosphorylation, leading to receptor internalization and degradation. Subject to both proteasomal and lysosomal degradation. In terms of processing, N-glycosylated in the endoplasmic reticulum. The N-glycan chains undergo further maturation to an Endo H-resistant form in the Golgi apparatus. In embryo, expressed in heart, lung, kidney, skin, head and liver but not in muscle. In adult, highest levels in brain. Also expressed in liver, lung, kidney, testis, ovary and uterus. Very low levels in heart, thymus, spleen and muscle.

It localises to the cell membrane. It is found in the cytoplasmic vesicle. Its subcellular location is the endoplasmic reticulum. The enzyme catalyses L-tyrosyl-[protein] + ATP = O-phospho-L-tyrosyl-[protein] + ADP + H(+). Its activity is regulated as follows. Present in an inactive conformation in the absence of bound ligand. Ligand binding leads to dimerization and activation by autophosphorylation on tyrosine residues. In terms of biological role, tyrosine-protein kinase that acts as a cell-surface receptor for fibroblast growth factors and plays an essential role in the regulation of cell proliferation, differentiation and apoptosis. Plays an essential role in the regulation of chondrocyte differentiation, proliferation and apoptosis, and is required for normal skeleton development. Regulates both osteogenesis and postnatal bone mineralization by osteoblasts. Promotes apoptosis in chondrocytes, but can also promote cancer cell proliferation. Required for normal development of the inner ear. Phosphorylates PLCG1, CBL and FRS2. Ligand binding leads to the activation of several signaling cascades. Activation of PLCG1 leads to the production of the cellular signaling molecules diacylglycerol and inositol 1,4,5-trisphosphate. Phosphorylation of FRS2 triggers recruitment of GRB2, GAB1, PIK3R1 and SOS1, and mediates activation of RAS, MAPK1/ERK2, MAPK3/ERK1 and the MAP kinase signaling pathway, as well as of the AKT1 signaling pathway. Plays a role in the regulation of vitamin D metabolism. Mutations that lead to constitutive kinase activation or impair normal FGFR3 maturation, internalization and degradation lead to aberrant signaling. Over-expressed or constitutively activated FGFR3 promotes activation of STAT1, STAT5A and STAT5B. Plays a role in postnatal lung development. The chain is Fibroblast growth factor receptor 3 (Fgfr3) from Mus musculus (Mouse).